The chain runs to 969 residues: Aspartic protease 5 (969 aa).

Residues 1–22 form the signal peptide; sequence MEAGAMGGSSFLSFSSGPSAET. Positions 1–45 are enriched in low complexity; that stretch reads MEAGAMGGSSFLSFSSGPSAETSPSSLSPPTSSSPSPSPQLVSDS. 5 disordered regions span residues 1–65, 79–104, 128–149, 173–193, and 311–382; these read MEAG…SSRT, ENEAAPTISQEERRGGSMTAASAGHL, SSATSVLSLGGERGRPPSRSSS, SSSSPLSPLPHPRGAPASACG, and FLSL…DLPR. Residues 23-820 are Lumenal-facing; it reads SPSSLSPPTS…PEGLPLSPQQ (798 aa). The segment covering 311 to 324 has biased composition (low complexity); that stretch reads FLSLSSSPRSLASD. Residues 335–355 show a composition bias toward basic and acidic residues; that stretch reads QSREQRGEREGERQRPDKGEE. One can recognise a Peptidase A1 domain in the interval 413-758; that stretch reads YFLDILVGTP…DREQDRVGFA (346 aa). Residue aspartate 431 is part of the active site. Residues 608 to 635 form a disordered region; that stretch reads PPESESTPATEALRPVAGESASRRISEK. Aspartate 682 is an active-site residue. The segment at 768–794 is disordered; it reads DQRPRGPDSGDGPKGRPTAPFTVPPLR. Basic and acidic residues predominate over residues 769 to 781; sequence QRPRGPDSGDGPK. The chain crosses the membrane as a helical span at residues 821–841; the sequence is LWVAAALVVVAILIAVTVILL. The Cytoplasmic segment spans residues 842–969; that stretch reads HTIKRPSRSS…TLLDLPLGGE (128 aa). Residues 922 to 969 are disordered; that stretch reads EDDGDFFGDDSVPSAEEQETAPSLSLREESSPFSASQSTLLDLPLGGE. A compositionally biased stretch (polar residues) spans 952–961; that stretch reads SPFSASQSTL.

The protein belongs to the peptidase A1 family. May be auto-cleaved to produce a 55 kDa form.

The protein resides in the golgi apparatus membrane. Its function is as follows. In tachyzoites, plays an essential role in the export of several dense granule proteins into the host cell by cleaving the localization motif RRLxx (termed Toxoplasma export element (TEXEL)) located downstream of the N-terminal secretory signal sequence. However, can also regulate the export of proteins that lack the TEXEL motif, such as GRA24. Requires Arg at P3 and P2, and Leu at P1 in the substrate TEXEL motif and, specifically, cleaves after Leu. Cleaves GRA16; proteolytic cleavage is essential for the correct trafficking of GRA16 from the parasite into the infected host nucleus. Cleaves GRA19 and GRA20. Cleaves MYR1. Cleaves LCAT, GRA44, GRA46, GRA46, ROP35/WNG1 and ROP34/WNG2. By regulating the export of dense granule proteins into the host cell, regulates multiple processes during tachyzoite infection of host cells, including recruitment of host mitochondria to the parasitophorous vacuole (PV), formation of the nanotubular network (NTN) or intravacuolar network (IVN) which are membranous tubules that bud from the PV membrane into the vacuolar lumen and, up-regulation of host cell genes to facilitate the parasite infection and modulate the host innate immune response. At the bradyzoite stage, also involved in the formation of the cyst wall. This is Aspartic protease 5 from Toxoplasma gondii.